The following is a 186-amino-acid chain: Threonylcarbamoyl-AMP synthase (186 aa).

The 184-residue stretch at 3–186 folds into the YrdC-like domain; the sequence is ELTLDSAVAT…DALSGNVLRS (184 aa).

Belongs to the SUA5 family. TsaC subfamily.

The protein localises to the cytoplasm. The enzyme catalyses L-threonine + hydrogencarbonate + ATP = L-threonylcarbamoyladenylate + diphosphate + H2O. In terms of biological role, required for the formation of a threonylcarbamoyl group on adenosine at position 37 (t(6)A37) in tRNAs that read codons beginning with adenine. Catalyzes the conversion of L-threonine, HCO(3)(-)/CO(2) and ATP to give threonylcarbamoyl-AMP (TC-AMP) as the acyladenylate intermediate, with the release of diphosphate. This Stenotrophomonas maltophilia (strain K279a) protein is Threonylcarbamoyl-AMP synthase.